The chain runs to 475 residues: Isocitrate dehydrogenase [NADP] (475 aa).

NADP(+) is bound at residue T104. 5 residues coordinate D-threo-isocitrate: S113, N115, R119, R129, and R153. Residue D362 coordinates Mg(2+). Residues 394–400 (HGTAPKH), N407, Y446, and R450 contribute to the NADP(+) site.

This sequence belongs to the isocitrate and isopropylmalate dehydrogenases family. Homodimer. Mg(2+) serves as cofactor. It depends on Mn(2+) as a cofactor.

It is found in the cytoplasm. The enzyme catalyses D-threo-isocitrate + NADP(+) = 2-oxoglutarate + CO2 + NADPH. With respect to regulation, inhibited non-competitively by ADP and 2-oxoglutarate, with respect to isocitrate and in a competitive manner by NADPH. Functionally, catalyzes the oxidative decarboxylation of isocitrate to 2-oxoglutarate and carbon dioxide with the concomitant reduction of NADP(+). Is specific for NADP(+), cannot use NAD(+). This Synechocystis sp. (strain ATCC 27184 / PCC 6803 / Kazusa) protein is Isocitrate dehydrogenase [NADP].